Here is a 245-residue protein sequence, read N- to C-terminus: NAD-dependent protein deacetylase (245 aa).

One can recognise a Deacetylase sirtuin-type domain in the interval 1–245 (MLLLDKINEL…SIGKVLETVI (245 aa)). NAD(+) contacts are provided by alanine 26, threonine 30, phenylalanine 37, arginine 38, glutamine 107, isoleucine 109, aspartate 110, and histidine 125. Phenylalanine 37 provides a ligand contact to nicotinamide. The nicotinamide site is built by isoleucine 109 and aspartate 110. Histidine 125 functions as the Proton acceptor in the catalytic mechanism. 4 residues coordinate Zn(2+): cysteine 133, cysteine 136, cysteine 155, and cysteine 158. NAD(+) contacts are provided by threonine 196, serine 197, asparagine 219, and isoleucine 237.

It belongs to the sirtuin family. Class U subfamily. It depends on Zn(2+) as a cofactor.

The protein resides in the cytoplasm. The catalysed reaction is N(6)-acetyl-L-lysyl-[protein] + NAD(+) + H2O = 2''-O-acetyl-ADP-D-ribose + nicotinamide + L-lysyl-[protein]. Its function is as follows. NAD-dependent protein deacetylase which modulates the activities of several enzymes which are inactive in their acetylated form. The chain is NAD-dependent protein deacetylase from Clostridium acetobutylicum (strain ATCC 824 / DSM 792 / JCM 1419 / IAM 19013 / LMG 5710 / NBRC 13948 / NRRL B-527 / VKM B-1787 / 2291 / W).